We begin with the raw amino-acid sequence, 514 residues long: Zinc finger and BTB domain-containing protein 2 (514 aa).

The BTB domain maps to 24 to 89 (CDCTVAIGDV…MYTGKMAPQL (66 aa)). Residues K147 and K154 each participate in a glycyl lysine isopeptide (Lys-Gly) (interchain with G-Cter in SUMO2) cross-link. The disordered stretch occupies residues 149-231 (ASAPEKLGRD…LEASSSDEQP (83 aa)). Polar residues-rich tracts occupy residues 161-200 (PQTS…PLQT) and 222-231 (LEASSSDEQP). Residues 254–276 (YACHLCGRRFTLRSSLREHLQIH) form a C2H2-type 1 zinc finger. S341 bears the Phosphoserine mark. K362 participates in a covalent cross-link: Glycyl lysine isopeptide (Lys-Gly) (interchain with G-Cter in SUMO2). The C2H2-type 2 zinc-finger motif lies at 363 to 385 (YECTICGRKFIQKSHWREHMYIH). The segment at 390 to 410 (FKCSTCDKSFCRANQAARHVC) adopts a C2H2-type 3; atypical zinc-finger fold. The segment at 448-468 (YKCNLCDKTFSTPNEVVKHSC) adopts a C2H2-type 4; atypical zinc-finger fold. Residues K465, K505, and K506 each participate in a glycyl lysine isopeptide (Lys-Gly) (interchain with G-Cter in SUMO2) cross-link.

Its subcellular location is the nucleus. Its function is as follows. May be involved in transcriptional regulation. The protein is Zinc finger and BTB domain-containing protein 2 (ZBTB2) of Homo sapiens (Human).